The chain runs to 71 residues: UPF0435 protein BLi00816/BL03111 (71 aa).

The protein belongs to the UPF0435 family.

The sequence is that of UPF0435 protein BLi00816/BL03111 from Bacillus licheniformis (strain ATCC 14580 / DSM 13 / JCM 2505 / CCUG 7422 / NBRC 12200 / NCIMB 9375 / NCTC 10341 / NRRL NRS-1264 / Gibson 46).